Here is an 836-residue protein sequence, read N- to C-terminus: uncharacterized protein (836 aa).

3 disordered regions span residues 1 to 25 (MDST…NEEE), 692 to 718 (DSRS…NNQR), and 789 to 836 (ESSG…GYAS). Polar residues-rich tracts occupy residues 789 to 799 (ESSGINVSNTR) and 825 to 836 (IDSSSAQNGYAS).

The protein resides in the nucleus. This is an uncharacterized protein from Schizosaccharomyces pombe (strain 972 / ATCC 24843) (Fission yeast).